We begin with the raw amino-acid sequence, 130 residues long: Small ribosomal subunit protein uS9 (130 aa).

The disordered stretch occupies residues 109-130; it reads RKKERKKYGQRAARARYQYSKR.

Belongs to the universal ribosomal protein uS9 family.

This is Small ribosomal subunit protein uS9 from Nitratidesulfovibrio vulgaris (strain DSM 19637 / Miyazaki F) (Desulfovibrio vulgaris).